The primary structure comprises 213 residues: Orotate phosphoribosyltransferase (213 aa).

Lys26 serves as a coordination point for 5-phospho-alpha-D-ribose 1-diphosphate. 34–35 (FF) contributes to the orotate binding site. 5-phospho-alpha-D-ribose 1-diphosphate contacts are provided by residues 72–73 (YK), Arg98, Lys99, Lys102, His104, and 123–131 (DDVISAGTS). 2 residues coordinate orotate: Ser127 and Arg155.

The protein belongs to the purine/pyrimidine phosphoribosyltransferase family. PyrE subfamily. As to quaternary structure, homodimer. Requires Mg(2+) as cofactor.

It carries out the reaction orotidine 5'-phosphate + diphosphate = orotate + 5-phospho-alpha-D-ribose 1-diphosphate. It functions in the pathway pyrimidine metabolism; UMP biosynthesis via de novo pathway; UMP from orotate: step 1/2. In terms of biological role, catalyzes the transfer of a ribosyl phosphate group from 5-phosphoribose 1-diphosphate to orotate, leading to the formation of orotidine monophosphate (OMP). In Neisseria meningitidis serogroup A / serotype 4A (strain DSM 15465 / Z2491), this protein is Orotate phosphoribosyltransferase.